Here is a 150-residue protein sequence, read N- to C-terminus: MTRKQKRLAIIGGGVGFLTAAVLLVMFAFSQAVAYFYVPGDLAKADLAPGTRIRLGGLVEAGSVKRGDGKTVTFSVTDTLAVVPVTYTGILPDLFREGQGVVAEGAFVAGSSVFVADTVLAKHDETYMPKDVADRLKAQGVTLGGKENIQ.

At 1 to 7 the chain is on the cytoplasmic side; it reads MTRKQKR. A helical; Signal-anchor for type II membrane protein transmembrane segment spans residues 8-28; sequence LAIIGGGVGFLTAAVLLVMFA. At 29–150 the chain is on the periplasmic side; that stretch reads FSQAVAYFYV…VTLGGKENIQ (122 aa). Residues His123 and Tyr127 each contribute to the heme site.

This sequence belongs to the CcmE/CycJ family.

Its subcellular location is the cell inner membrane. Heme chaperone required for the biogenesis of c-type cytochromes. Transiently binds heme delivered by CcmC and transfers the heme to apo-cytochromes in a process facilitated by CcmF and CcmH. The sequence is that of Cytochrome c-type biogenesis protein CcmE from Sinorhizobium fredii (strain NBRC 101917 / NGR234).